Here is a 116-residue protein sequence, read N- to C-terminus: Ribosome-binding factor A (116 aa).

It belongs to the RbfA family. Monomer. Binds 30S ribosomal subunits, but not 50S ribosomal subunits or 70S ribosomes.

It localises to the cytoplasm. Functionally, one of several proteins that assist in the late maturation steps of the functional core of the 30S ribosomal subunit. Associates with free 30S ribosomal subunits (but not with 30S subunits that are part of 70S ribosomes or polysomes). Required for efficient processing of 16S rRNA. May interact with the 5'-terminal helix region of 16S rRNA. The chain is Ribosome-binding factor A from Ureaplasma parvum serovar 3 (strain ATCC 27815 / 27 / NCTC 11736).